We begin with the raw amino-acid sequence, 1170 residues long: RNA-binding protein 33 (1170 aa).

Disordered regions lie at residues 1–152 (MAAA…EGHE) and 199–221 (KDIK…LRFK). An N-acetylalanine modification is found at alanine 2. The span at 20-36 (QFDKPGAERSWRRRAAD) shows a compositional bias: basic and acidic residues. Positions 37–49 (EDWDSELEDDLLG) are enriched in acidic residues. Serine 41 is subject to Phosphoserine. Polar residues predominate over residues 82-108 (FSSQGVTISLNATSGMVTSFELSDNTN). 2 stretches are compositionally biased toward acidic residues: residues 112 to 126 (GEQE…GEDE) and 203 to 214 (EESDEEEEDDEE). A phosphoserine mark is found at serine 205 and serine 233. Disordered regions lie at residues 259 to 708 (FEER…NSNL), 721 to 784 (MSSS…PDED), 833 to 863 (QLYA…PFPG), and 942 to 1050 (AVPQ…VPPG). Residues 267-278 (KQGRYSSRRGGR) show a composition bias toward basic residues. A compositionally biased stretch (basic and acidic residues) spans 289–306 (GDQRRESTERGRMKDHRP). Residues 311 to 329 (TQPPVVPQAPPPPPPPPQQ) are compositionally biased toward pro residues. 3 stretches are compositionally biased toward low complexity: residues 335 to 348 (LFQP…LPVQ), 357 to 372 (QGMH…RMMM), and 394 to 403 (TVVTPVQVPL). Residues 419 to 433 (FPGPPEFPQHTPGPV) show a composition bias toward pro residues. Residue arginine 470 is modified to Asymmetric dimethylarginine. Composition is skewed to pro residues over residues 481–490 (SPPPPPPPPT), 554–568 (FIPP…PGQP), and 582–630 (LHPP…PQHP). Over residues 632–642 (QHQHHHHHHHL) the composition is skewed to basic residues. Composition is skewed to polar residues over residues 662–708 (QTAQ…NSNL) and 721–732 (MSSSRCSATPSA). Serine 741 and serine 765 each carry phosphoserine. Residues 789–835 (LYRLKIEEQKRLREEILKQKELRRQQQAGARKKELLERLAQQQQQLY) are a coiled coil. Serine 951 is modified (phosphoserine). Lysine 960 is covalently cross-linked (Glycyl lysine isopeptide (Lys-Gly) (interchain with G-Cter in SUMO2)). Residues serine 973 and serine 991 each carry the phosphoserine modification. Arginine 1028 bears the Asymmetric dimethylarginine; alternate mark. Arginine 1028 carries the omega-N-methylarginine; alternate modification. Positions 1098–1170 (CVVSVEGLSS…SHINVALIVE (73 aa)) constitute an RRM domain.

As to quaternary structure, associates with the NXF1-NXT1 RNA export complex. Interacts with ALKBH5; facilitating ALKBH5 recruitment to m6A-containing transcripts. Interacts with SENP1; promoting ALKBH5 deSUMOylation and subsequent activation.

The protein localises to the nucleus. It localises to the cytoplasm. Functionally, RNA reader protein, which recognizes and binds specific RNAs, thereby regulating RNA metabolic processes, such as mRNA export, mRNA stability and/or translation. Binds a subset of intronless RNAs containing GC-rich elements, such as NORAD, and promotes their nuclear export by recruiting target RNAs to components of the NXF1-NXT1 RNA export machinery. Specifically recognizes and binds N6-methyladenosine (m6A)-containing mRNAs, promoting their demethylation by ALKBH5. Acts as an molecular adapter, which (1) promotes ALKBH5 recruitment to m6A-containing transcripts and (2) activates ALKBH5 demethylase activity by recruiting SENP1, leading to ALKBH5 deSUMOylation and subsequent activation. This Homo sapiens (Human) protein is RNA-binding protein 33.